The primary structure comprises 185 residues: Tetratricopeptide repeat protein 36 homolog (185 aa).

TPR repeat units lie at residues 53–86 (SREL…AQRA), 88–119 (VLNN…ASDQ), and 125–158 (CHAH…GSKF).

The protein belongs to the TTC36 family.

The polypeptide is Tetratricopeptide repeat protein 36 homolog (Drosophila pseudoobscura pseudoobscura (Fruit fly)).